The primary structure comprises 354 residues: uncharacterized protein (354 aa).

Residues 96–130 form a disordered region; it reads QVCPASAPNGKRAMKIPKVKEPRGENSSKKSSADQ. Positions 113 to 127 are enriched in basic and acidic residues; it reads KVKEPRGENSSKKSS.

This is an uncharacterized protein from Caenorhabditis elegans.